We begin with the raw amino-acid sequence, 301 residues long: Acetylglutamate kinase (301 aa).

Substrate contacts are provided by residues 68–69 (GG), arginine 90, and asparagine 195.

This sequence belongs to the acetylglutamate kinase family. ArgB subfamily.

It localises to the cytoplasm. The catalysed reaction is N-acetyl-L-glutamate + ATP = N-acetyl-L-glutamyl 5-phosphate + ADP. It participates in amino-acid biosynthesis; L-arginine biosynthesis; N(2)-acetyl-L-ornithine from L-glutamate: step 2/4. Catalyzes the ATP-dependent phosphorylation of N-acetyl-L-glutamate. The protein is Acetylglutamate kinase of Ectopseudomonas mendocina (strain ymp) (Pseudomonas mendocina).